The primary structure comprises 467 residues: Probable glutamate decarboxylase gamma (467 aa).

Lys278 carries the post-translational modification N6-(pyridoxal phosphate)lysine.

The protein belongs to the group II decarboxylase family. The cofactor is pyridoxal 5'-phosphate.

It catalyses the reaction L-glutamate + H(+) = 4-aminobutanoate + CO2. In Listeria monocytogenes serovar 1/2a (strain ATCC BAA-679 / EGD-e), this protein is Probable glutamate decarboxylase gamma.